We begin with the raw amino-acid sequence, 454 residues long: MVKKAKWLKNVKKAFSPDSKKLKHESVECQDSVISYPVLIATSRSSSPQFEVRVDEVNYEQKKNLYPPSSDSVTATVAHVLVDSPPSSPESVHQAIVVNRFAGKSKEEAAAILIQSTFRGHLARRESQVMRGQERLKLLMEGSVVQRQAAITLKCMQTLSRVQSQIRSRRIRMSEENQARHKQLLQKHAKELGGLKNGGNWNYSNQSKEQVEAGMLHKYEATMRRERALAYAFTHQQNLKSFSKTANPMFMDPSNPTWGWSWLERWMAGRPWESSEKEQNTTNNDNSSVKNSTNRNSQGGETAKSSNRNKLNSSTKPNTPSASSTATRNPRKKRPIPSSIKSKSSDDEAKSSERNRRPSIARPSVSDDETLSSSTARRSSNLIPTTKSARGKPKSQTSSRVAVTTSTTEESSILPEKAPAKKRLSTSASPAPKPRRSSAPPKVEKGVLKAERTP.

The segment at 103–113 is calmodulin-binding; sequence GKSKEEAAAIL. The IQ domain occupies 107–136; the sequence is EEAAAILIQSTFRGHLARRESQVMRGQERL. Residues 272 to 454 are disordered; the sequence is WESSEKEQNT…KGVLKAERTP (183 aa). Over residues 280–328 the composition is skewed to polar residues; the sequence is NTTNNDNSSVKNSTNRNSQGGETAKSSNRNKLNSSTKPNTPSASSTATR. The segment covering 343–356 has biased composition (basic and acidic residues); it reads KSSDDEAKSSERNR. The segment covering 371–388 has biased composition (polar residues); the sequence is LSSSTARRSSNLIPTTKS. Residues 397-412 are compositionally biased toward low complexity; the sequence is TSSRVAVTTSTTEESS. The short motif at 421-428 is the Nuclear localization signal element; the sequence is KKRLSTSA. Residues 442-454 are compositionally biased toward basic and acidic residues; sequence KVEKGVLKAERTP.

It belongs to the IQD family. As to quaternary structure, binds to multiple calmodulin (CaM) in the presence of Ca(2+)(e.g. CaM1 and CaM2) and CaM-like (e.g. CML8 and CML9) proteins. Interacts with KLCR1. In terms of tissue distribution, expressed in roots, flowers, stems, siliques, inflorescence stems and whole shoots. Restricted to the vascular bundles.

It is found in the nucleus. Its subcellular location is the nucleolus. It localises to the cytoplasm. The protein resides in the cytoskeleton. Its function is as follows. May be involved in cooperative interactions with calmodulins or calmodulin-like proteins. Modulates expression of glucosinolate pathway genes. May associate with nucleic acids and regulate gene expression at the transcriptional or post-transcriptional level. Recruits KLCR1 and calmodulin proteins to microtubules, thus being a potential scaffold in cellular signaling and trafficking. In Arabidopsis thaliana (Mouse-ear cress), this protein is Protein IQ-DOMAIN 1.